Consider the following 334-residue polypeptide: UDP-glucose 4-epimerase (334 aa).

Residues 11–12 (YI), 31–36 (DNLQKG), 50–51 (DI), 72–76 (FAANS), Asn91, Thr116, Tyr140, Lys144, and Phe168 each bind NAD(+). Substrate contacts are provided by Thr116 and Tyr140. Catalysis depends on Tyr140, which acts as the Proton acceptor. Residues Asn169, 188–189 (HL), 205–207 (AIF), Arg220, and 281–284 (RSGD) contribute to the substrate site.

Belongs to the NAD(P)-dependent epimerase/dehydratase family. Homodimer. NAD(+) serves as cofactor.

It carries out the reaction UDP-alpha-D-glucose = UDP-alpha-D-galactose. The protein operates within carbohydrate metabolism; galactose metabolism. Involved in the metabolism of galactose. Catalyzes the conversion of UDP-galactose (UDP-Gal) to UDP-glucose (UDP-Glc) through a mechanism involving the transient reduction of NAD. The protein is UDP-glucose 4-epimerase (galE) of Halalkalibacterium halodurans (strain ATCC BAA-125 / DSM 18197 / FERM 7344 / JCM 9153 / C-125) (Bacillus halodurans).